The chain runs to 580 residues: Multidrug resistance-like ATP-binding protein MdlB (580 aa).

Residues Ile-25–Gln-310 enclose the ABC transmembrane type-1 domain. The next 5 membrane-spanning stretches (helical) occupy residues Ile-26–Ile-46, Phe-61–Phe-81, Val-142–Thr-162, Trp-165–Tyr-185, and Leu-258–Val-278. The ABC transporter domain maps to Ile-341–Phe-575. Gly-375–Ser-382 contributes to the ATP binding site.

This sequence belongs to the ABC transporter superfamily. Drug exporter-2 (TC 3.A.1.117) family.

It localises to the cell membrane. The catalysed reaction is ATP + H2O + xenobioticSide 1 = ADP + phosphate + xenobioticSide 2.. This is Multidrug resistance-like ATP-binding protein MdlB (mdlB) from Buchnera aphidicola subsp. Schizaphis graminum (strain Sg).